The primary structure comprises 232 residues: Orotate phosphoribosyltransferase (232 aa).

Position 28 (Lys-28) interacts with 5-phospho-alpha-D-ribose 1-diphosphate. Position 36–37 (36–37 (FF)) interacts with orotate. 5-phospho-alpha-D-ribose 1-diphosphate-binding positions include 78–79 (YK), Arg-108, Lys-109, Lys-112, His-114, and 134–142 (DDVITAGTA). Thr-138 and Arg-166 together coordinate orotate.

Belongs to the purine/pyrimidine phosphoribosyltransferase family. PyrE subfamily. As to quaternary structure, homodimer.

It carries out the reaction orotidine 5'-phosphate + diphosphate = orotate + 5-phospho-alpha-D-ribose 1-diphosphate. It participates in pyrimidine metabolism; UMP biosynthesis via de novo pathway; UMP from orotate: step 1/2. Functionally, catalyzes the transfer of a ribosyl phosphate group from 5-phosphoribose 1-diphosphate to orotate, leading to the formation of orotidine monophosphate (OMP). The chain is Orotate phosphoribosyltransferase (URA5) from Sordaria macrospora.